We begin with the raw amino-acid sequence, 23 residues long: Pseudin-3 (23 aa).

In terms of tissue distribution, expressed by the skin glands.

The protein resides in the secreted. In terms of biological role, possesses antifungal activity against C.albicans and is also active against E.coli and S.aureus. This Pseudis paradoxa (Paradoxical frog) protein is Pseudin-3.